A 255-amino-acid polypeptide reads, in one-letter code: tRNA pseudouridine synthase A (255 aa).

Asp-53 (nucleophile) is an active-site residue. Tyr-113 lines the substrate pocket.

Belongs to the tRNA pseudouridine synthase TruA family. Homodimer.

It carries out the reaction uridine(38/39/40) in tRNA = pseudouridine(38/39/40) in tRNA. Functionally, formation of pseudouridine at positions 38, 39 and 40 in the anticodon stem and loop of transfer RNAs. This is tRNA pseudouridine synthase A from Acidiphilium cryptum (strain JF-5).